The primary structure comprises 220 residues: Ribosome maturation factor RimM (220 aa).

The 78-residue stretch at 143–220 folds into the PRC barrel domain; that stretch reads EGEFYWVDLI…RIVVDWGLDY (78 aa).

This sequence belongs to the RimM family. Binds ribosomal protein uS19.

It localises to the cytoplasm. Its function is as follows. An accessory protein needed during the final step in the assembly of 30S ribosomal subunit, possibly for assembly of the head region. Essential for efficient processing of 16S rRNA. May be needed both before and after RbfA during the maturation of 16S rRNA. It has affinity for free ribosomal 30S subunits but not for 70S ribosomes. The chain is Ribosome maturation factor RimM from Cupriavidus metallidurans (strain ATCC 43123 / DSM 2839 / NBRC 102507 / CH34) (Ralstonia metallidurans).